A 379-amino-acid chain; its full sequence is Chaperone protein DnaJ (379 aa).

The J domain occupies 5–69 (EYYERLGVDK…QKRAAYDQYG (65 aa)). A CR-type zinc finger spans residues 141 to 223 (GVEKQVKYNR…CHGSGHEKVA (83 aa)). Positions 154, 157, 171, 174, 197, 200, and 214 each coordinate Zn(2+). CXXCXGXG motif repeat units lie at residues 154-161 (CHTCGGSG), 171-178 (CHKCGGRG), 197-204 (CDVCHGTG), and 211-218 (STTCHGSG).

The protein belongs to the DnaJ family. As to quaternary structure, homodimer. Requires Zn(2+) as cofactor.

Its subcellular location is the cytoplasm. Functionally, participates actively in the response to hyperosmotic and heat shock by preventing the aggregation of stress-denatured proteins and by disaggregating proteins, also in an autonomous, DnaK-independent fashion. Unfolded proteins bind initially to DnaJ; upon interaction with the DnaJ-bound protein, DnaK hydrolyzes its bound ATP, resulting in the formation of a stable complex. GrpE releases ADP from DnaK; ATP binding to DnaK triggers the release of the substrate protein, thus completing the reaction cycle. Several rounds of ATP-dependent interactions between DnaJ, DnaK and GrpE are required for fully efficient folding. Also involved, together with DnaK and GrpE, in the DNA replication of plasmids through activation of initiation proteins. The protein is Chaperone protein DnaJ of Lactococcus lactis subsp. cremoris (Streptococcus cremoris).